Here is a 365-residue protein sequence, read N- to C-terminus: Protein RecA (365 aa).

76-83 (GPESSGKT) lines the ATP pocket. Residues 346 to 365 (DVPGSERDGDEDAGDMEASA) are disordered. The segment covering 353–365 (DGDEDAGDMEASA) has biased composition (acidic residues).

Belongs to the RecA family.

It localises to the cytoplasm. In terms of biological role, can catalyze the hydrolysis of ATP in the presence of single-stranded DNA, the ATP-dependent uptake of single-stranded DNA by duplex DNA, and the ATP-dependent hybridization of homologous single-stranded DNAs. It interacts with LexA causing its activation and leading to its autocatalytic cleavage. In Parvibaculum lavamentivorans (strain DS-1 / DSM 13023 / NCIMB 13966), this protein is Protein RecA.